The chain runs to 314 residues: Zinc transporter ZIP3 (314 aa).

The Extracellular segment spans residues 1-3 (MVK). Residues 4-24 (LLVAKILCMVGMFFFMLLGSL) traverse the membrane as a helical segment. At 25–42 (LPVKIIEMDFEKAHRSKK) the chain is on the cytoplasmic side. A helical membrane pass occupies residues 43–63 (ILSLCNTFGGGVFLATCFNAL). The Extracellular segment spans residues 64–85 (LPAVREKLKEVLTLAHISTDYP). The helical transmembrane segment at 86 to 106 (LAETIMLLGFFMTVFLEQLVL) threads the bilayer. The Cytoplasmic segment spans residues 107–169 (TFRKERPAFI…QELSRSSPLR (63 aa)). 2 positions are modified to phosphoserine: Ser125 and Ser129. A helical transmembrane segment spans residues 170–190 (LLSLVFALSAHSVFEGLALGL). The Extracellular segment spans residues 191–196 (QEEGEK). Residues 197–217 (VVSLFVGVAIHETLVAVALGI) form a helical membrane-spanning segment. Residues 218–229 (NMARSAMALRDA) lie on the Cytoplasmic side of the membrane. A helical membrane pass occupies residues 230-250 (AKLAVTVSAMIPLGISLGLGI). The Extracellular portion of the chain corresponds to 251–262 (DSAQGMPSSVAS). A helical transmembrane segment spans residues 263–283 (VLLQGLAGGTFLFVTFFEILA). Topologically, residues 284–292 (KELEEKSDR) are cytoplasmic. The chain crosses the membrane as a helical span at residues 293–313 (LLKVLFLVLGYTVLAGMVFIK). Position 314 (Trp314) is a topological domain, extracellular.

It belongs to the ZIP transporter (TC 2.A.5) family.

It is found in the cell membrane. Its subcellular location is the apical cell membrane. It carries out the reaction Zn(2+)(in) = Zn(2+)(out). Its function is as follows. Transporter for the divalent cation Zn(2+). Mediates the influx of Zn(2+) into cells from extracellular space. Controls Zn(2+) accumulation into dentate gyrus granule cells in the hippocampus. Mediates Zn(2+) reuptake from the secreted milk within the alveolar lumen. This Bos taurus (Bovine) protein is Zinc transporter ZIP3 (SLC39A3).